The chain runs to 661 residues: Pentatricopeptide repeat-containing protein At3g04750, mitochondrial (661 aa).

A mitochondrion-targeting transit peptide spans M1–C18. 13 PPR repeats span residues N99 to P131, D132 to S163, G165 to P195, D196 to P230, D231 to Y265, N268 to K298, D299 to S333, W334 to P366, D367 to G401, D402 to K432, D433 to P467, N468 to K498, and E504 to S539. Residues M540–V615 form a type E motif region. The interval E616–K647 is type E(+) motif.

The protein belongs to the PPR family. PCMP-E subfamily.

The protein localises to the mitochondrion. This Arabidopsis thaliana (Mouse-ear cress) protein is Pentatricopeptide repeat-containing protein At3g04750, mitochondrial (PCMP-E81).